The primary structure comprises 322 residues: Undecaprenyl-phosphate 4-deoxy-4-formamido-L-arabinose transferase (322 aa).

Residues 1-235 are Cytoplasmic-facing; it reads MFEIHPVKKV…TCLTTTPLRM (235 aa). The chain crosses the membrane as a helical span at residues 236-256; the sequence is LSLLGSIIAIGGFSIAVLLVI. Residues 257–269 lie on the Periplasmic side of the membrane; it reads LRLTFGPQWAAEG. The helical transmembrane segment at 270-290 threads the bilayer; sequence VFMLFAVLFTFIGAQFIGMGL. Over 291–322 the chain is Cytoplasmic; that stretch reads LGEYIGRIYTDVRARPRYFVQQVIRPSSKENE.

Belongs to the glycosyltransferase 2 family.

It is found in the cell inner membrane. It carries out the reaction UDP-4-deoxy-4-formamido-beta-L-arabinose + di-trans,octa-cis-undecaprenyl phosphate = 4-deoxy-4-formamido-alpha-L-arabinopyranosyl di-trans,octa-cis-undecaprenyl phosphate + UDP. The protein operates within glycolipid biosynthesis; 4-amino-4-deoxy-alpha-L-arabinose undecaprenyl phosphate biosynthesis; 4-amino-4-deoxy-alpha-L-arabinose undecaprenyl phosphate from UDP-4-deoxy-4-formamido-beta-L-arabinose and undecaprenyl phosphate: step 1/2. It functions in the pathway bacterial outer membrane biogenesis; lipopolysaccharide biosynthesis. Functionally, catalyzes the transfer of 4-deoxy-4-formamido-L-arabinose from UDP to undecaprenyl phosphate. The modified arabinose is attached to lipid A and is required for resistance to polymyxin and cationic antimicrobial peptides. The polypeptide is Undecaprenyl-phosphate 4-deoxy-4-formamido-L-arabinose transferase (Escherichia coli O7:K1 (strain IAI39 / ExPEC)).